The chain runs to 163 residues: MPSFDIVSEVDLQEARNAVDNASREVESRFDFRNVEASFELNDASKTIKVLSESDFQVNQLLDILRAKLLKRGIEGSSLDVPENIVHSGKTWFVEAKLKQGIESATQKKIVKMIKDSKLKVQAQIQGDEIRVTGKSRDDLQAVMAMVRGSDLGQPFQFKNFRD.

This sequence belongs to the YajQ family.

Functionally, nucleotide-binding protein. This is Nucleotide-binding protein YajQ from Escherichia coli O81 (strain ED1a).